A 544-amino-acid chain; its full sequence is CTP synthase (544 aa).

An amidoligase domain region spans residues 1-266 (MTKFIFVTGG…DDLICERFGL (266 aa)). Residue S13 coordinates CTP. S13 contacts UTP. Residues 14 to 19 (SLGKGI) and D71 each bind ATP. Mg(2+) is bound by residues D71 and E140. Residues 147–149 (DIE), 187–192 (KTKPTQ), and K223 contribute to the CTP site. Residues 187–192 (KTKPTQ) and K223 each bind UTP. One can recognise a Glutamine amidotransferase type-1 domain in the interval 291–543 (TVAMVGKYVE…VKAAKNYSEA (253 aa)). G354 contacts L-glutamine. C381 acts as the Nucleophile; for glutamine hydrolysis in catalysis. L-glutamine-binding positions include 382 to 385 (LGMQ), E404, and R471. Active-site residues include H516 and E518.

Belongs to the CTP synthase family. Homotetramer.

The catalysed reaction is UTP + L-glutamine + ATP + H2O = CTP + L-glutamate + ADP + phosphate + 2 H(+). It catalyses the reaction L-glutamine + H2O = L-glutamate + NH4(+). It carries out the reaction UTP + NH4(+) + ATP = CTP + ADP + phosphate + 2 H(+). It participates in pyrimidine metabolism; CTP biosynthesis via de novo pathway; CTP from UDP: step 2/2. Allosterically activated by GTP, when glutamine is the substrate; GTP has no effect on the reaction when ammonia is the substrate. The allosteric effector GTP functions by stabilizing the protein conformation that binds the tetrahedral intermediate(s) formed during glutamine hydrolysis. Inhibited by the product CTP, via allosteric rather than competitive inhibition. In terms of biological role, catalyzes the ATP-dependent amination of UTP to CTP with either L-glutamine or ammonia as the source of nitrogen. Regulates intracellular CTP levels through interactions with the four ribonucleotide triphosphates. The polypeptide is CTP synthase (Psychrobacter arcticus (strain DSM 17307 / VKM B-2377 / 273-4)).